Reading from the N-terminus, the 124-residue chain is Small ribosomal subunit protein uS12 (124 aa).

Residue Asp-89 is modified to 3-methylthioaspartic acid.

It belongs to the universal ribosomal protein uS12 family. As to quaternary structure, part of the 30S ribosomal subunit. Contacts proteins S8 and S17. May interact with IF1 in the 30S initiation complex.

In terms of biological role, with S4 and S5 plays an important role in translational accuracy. Its function is as follows. Interacts with and stabilizes bases of the 16S rRNA that are involved in tRNA selection in the A site and with the mRNA backbone. Located at the interface of the 30S and 50S subunits, it traverses the body of the 30S subunit contacting proteins on the other side and probably holding the rRNA structure together. The combined cluster of proteins S8, S12 and S17 appears to hold together the shoulder and platform of the 30S subunit. This chain is Small ribosomal subunit protein uS12, found in Aliivibrio salmonicida (strain LFI1238) (Vibrio salmonicida (strain LFI1238)).